Consider the following 225-residue polypeptide: NAD(P)H-quinone oxidoreductase subunit K, chloroplastic (225 aa).

[4Fe-4S] cluster-binding residues include C43, C44, C108, and C139.

Belongs to the complex I 20 kDa subunit family. As to quaternary structure, NDH is composed of at least 16 different subunits, 5 of which are encoded in the nucleus. [4Fe-4S] cluster is required as a cofactor.

Its subcellular location is the plastid. It is found in the chloroplast thylakoid membrane. The enzyme catalyses a plastoquinone + NADH + (n+1) H(+)(in) = a plastoquinol + NAD(+) + n H(+)(out). It catalyses the reaction a plastoquinone + NADPH + (n+1) H(+)(in) = a plastoquinol + NADP(+) + n H(+)(out). NDH shuttles electrons from NAD(P)H:plastoquinone, via FMN and iron-sulfur (Fe-S) centers, to quinones in the photosynthetic chain and possibly in a chloroplast respiratory chain. The immediate electron acceptor for the enzyme in this species is believed to be plastoquinone. Couples the redox reaction to proton translocation, and thus conserves the redox energy in a proton gradient. The sequence is that of NAD(P)H-quinone oxidoreductase subunit K, chloroplastic from Solanum bulbocastanum (Wild potato).